The following is a 51-amino-acid chain: Non-specific lipid-transfer protein (51 aa).

This sequence belongs to the plant LTP family.

Plant non-specific lipid-transfer proteins transfer phospholipids as well as galactolipids across membranes. May play a role in wax or cutin deposition in the cell walls of expanding epidermal cells and certain secretory tissues. This Lycium barbarum (Barbary matrimony-vine) protein is Non-specific lipid-transfer protein.